The primary structure comprises 258 residues: Axonemal dynein light intermediate polypeptide 1 (258 aa).

Disordered regions lie at residues 1–60 (MIPP…CVPD) and 202–231 (DLERQVNEQKAKCEATEKRESERRQVEEKK). Positions 176–255 (MRKALQAEQG…LKAQLEGIIA (80 aa)) form a coiled coil.

Belongs to the inner dynein arm light chain family. In terms of assembly, interacts with CFAP45. Interacts with DYNC1H1. In terms of tissue distribution, predominantly expressed in the testis, also detected at lower levels in several tissues expressing cilia. Strongly expressed in elongating spermatid cells (at protein level).

It is found in the cell projection. The protein resides in the cilium. It localises to the flagellum. The protein localises to the dynein axonemal particle. Its subcellular location is the cytoplasm. Its function is as follows. Involved in sperm flagellum assembly. This chain is Axonemal dynein light intermediate polypeptide 1, found in Mus musculus (Mouse).